We begin with the raw amino-acid sequence, 668 residues long: CLK4-associating serine/arginine rich protein (668 aa).

At Ser101 the chain carries Phosphoserine. Disordered stretches follow at residues 173–232 and 252–668; these read AEVE…GMAD and AKAL…HYRH. A compositionally biased stretch (acidic residues) spans 182–214; that stretch reads PEEEESPAEEESNSDEDEVIPDIDVEVDVDELN. The segment covering 265–283 has biased composition (basic residues); sequence RRSRRQRREFREKRLRGRK. Phosphoserine is present on residues Ser285 and Ser294. Basic and acidic residues predominate over residues 290 to 313; that stretch reads ARRDSPTYDPYKRSPSESSSESRS. The residue at position 327 (Thr327) is a Phosphothreonine. Residues Ser331 and Ser335 each carry the phosphoserine modification. Low complexity-rich tracts occupy residues 340 to 353 and 378 to 395; these read AAAAAAAAASGAAP and SSSSASRTSSSRSSSRSS. Residues 396 to 435 show a composition bias toward basic residues; the sequence is SRSRRGYYRSGRHARSRSRSWSRSRSRSRRYSRSRSRGRR. Residues 436–446 are compositionally biased toward basic and acidic residues; it reads HSDGGSRDGHR. Residues 475 to 486 are compositionally biased toward basic residues; the sequence is RGARGPRHHSSS. Composition is skewed to low complexity over residues 487-510 and 518-527; these read HSRSSWSLSPSRSRSVTRSGSRSQ and QSHSQSQSHS. Residue Ser541 is modified to Phosphoserine. Thr567 is subject to Phosphothreonine. Residues 579-641 adopt a coiled-coil conformation; sequence ALNRQFKADK…ERQYSRQSRS (63 aa). 2 stretches are compositionally biased toward basic and acidic residues: residues 584-611 and 619-635; these read FKADKKAAQEKMIQQEHERQEREDELRA and KERERREKEREEWERQY. Low complexity predominate over residues 636-645; it reads SRQSRSPSPR. Over residues 653 to 668 the composition is skewed to basic residues; that stretch reads SRRRSRSRSRSPHYRH.

It belongs to the splicing factor SR family. In terms of assembly, probably interacts with CLK4. In terms of processing, phosphorylated in vitro by CLK4. In terms of tissue distribution, highly expressed in brain. Expressed at intermediate level in lung and liver. In brain, it is expressed in the hippocampus, cerebellum and olfactory bulb.

It is found in the nucleus. Its subcellular location is the nucleoplasm. Functionally, probably functions as an alternative splicing regulator. May regulate the mRNA splicing of genes such as CLK1. May act by regulating members of the CLK kinase family. The polypeptide is CLK4-associating serine/arginine rich protein (Clasrp) (Mus musculus (Mouse)).